Consider the following 475-residue polypeptide: Cytochrome P450 monooxygenase sthD (475 aa).

Positions 1-17 (MAAYFLLGLYGSTLVYR) are cleaved as a signal peptide. Residues 276-296 (FIIIAGSDTVAATLTFAFFYL) traverse the membrane as a helical segment. N-linked (GlcNAc...) asparagine glycosylation occurs at Asn336. Cys418 contributes to the heme binding site.

The protein belongs to the cytochrome P450 family. Heme is required as a cofactor.

It is found in the membrane. The enzyme catalyses betaenone A + NADPH + O2 + H(+) = stemphyloxin II + NADP(+) + H2O. It carries out the reaction betaenone C + NADPH + O2 + H(+) = stemphyloxin I + NADP(+) + H2O. It functions in the pathway mycotoxin biosynthesis. In terms of biological role, cytochrome P450 monooxygenase; part of the gene cluster that mediates the biosynthesis of the phytotoxin stemphyloxin II. The first step of the pathway is the synthesis of dehydroprobetaenone I by the polyketide synthase sthA and the enoyl reductase sthE via condensation of one acetyl-CoA starter unit with 7 malonyl-CoA units and 5 methylations. The C-terminal reductase (R) domain of sthA catalyzes the reductive release of the polyketide chain. Because sthA lacks a designated enoylreductase (ER) domain, the required activity is provided the enoyl reductase sthE. The short-chain dehydrogenase/reductase sthC then catalyzes reduction of dehydroprobetaenone I to probetaenone I. The cytochrome P450 monooxygenase sthF catalyzes successive epoxidation, oxidation (resulting from epoxide opening) and hydroxylation to install a tertiary alcohol in the decaline ring to yield betaenone C from dehydroprobetaenone I and betaenone B from probetaenone I. The FAD-linked oxidoreductase sthB is responsible for the conversion of betaenone C to betaenone A via an intramolecular aldol reaction between C-1 and C-17 to form the bridged tricyclic system in betaenone A. Finally, the cytochrome P450 monooxygenase sthD catalyzes the hydroxylation of C-15 to afford the final metabolite stemphyloxin II. The protein is Cytochrome P450 monooxygenase sthD of Phaeosphaeria nodorum (strain SN15 / ATCC MYA-4574 / FGSC 10173) (Glume blotch fungus).